A 943-amino-acid chain; its full sequence is Isoleucine--tRNA ligase (943 aa).

Positions Pro58–His68 match the 'HIGH' region motif. Glu567 lines the L-isoleucyl-5'-AMP pocket. A 'KMSKS' region motif is present at residues Lys608–Ser612. Residue Lys611 coordinates ATP. Residues Cys906, Cys909, Cys926, and Cys929 each coordinate Zn(2+).

It belongs to the class-I aminoacyl-tRNA synthetase family. IleS type 1 subfamily. Monomer. Zn(2+) is required as a cofactor.

It localises to the cytoplasm. The catalysed reaction is tRNA(Ile) + L-isoleucine + ATP = L-isoleucyl-tRNA(Ile) + AMP + diphosphate. Its function is as follows. Catalyzes the attachment of isoleucine to tRNA(Ile). As IleRS can inadvertently accommodate and process structurally similar amino acids such as valine, to avoid such errors it has two additional distinct tRNA(Ile)-dependent editing activities. One activity is designated as 'pretransfer' editing and involves the hydrolysis of activated Val-AMP. The other activity is designated 'posttransfer' editing and involves deacylation of mischarged Val-tRNA(Ile). The sequence is that of Isoleucine--tRNA ligase from Pseudomonas entomophila (strain L48).